Consider the following 257-residue polypeptide: Acetylglutamate kinase (257 aa).

Substrate-binding positions include 43–44 (GG), R65, and N157.

This sequence belongs to the acetylglutamate kinase family. ArgB subfamily.

It localises to the cytoplasm. The catalysed reaction is N-acetyl-L-glutamate + ATP = N-acetyl-L-glutamyl 5-phosphate + ADP. The protein operates within amino-acid biosynthesis; L-arginine biosynthesis; N(2)-acetyl-L-ornithine from L-glutamate: step 2/4. In terms of biological role, catalyzes the ATP-dependent phosphorylation of N-acetyl-L-glutamate. The sequence is that of Acetylglutamate kinase from Mannheimia succiniciproducens (strain KCTC 0769BP / MBEL55E).